Reading from the N-terminus, the 1916-residue chain is Endoribonuclease Dicer (1916 aa).

The 177-residue stretch at 51–227 (LLEAALDHNT…ELEEKIQKLE (177 aa)) folds into the Helicase ATP-binding domain. ATP is bound at residue 64–71 (LNTGSGKT). The DECH box motif lies at 175 to 178 (DECH). A required for interaction with PRKRA and TARBP2 region spans residues 256–595 (DCGPFTDRSG…LRNKCSKSAD (340 aa)). A disordered region spans residues 409-433 (YVSWSDSEDDDDDEEIEEKEKPETN). Residues serine 413 and serine 415 each carry the phosphoserine modification. The span at 414-425 (DSEDDDDDEEIE) shows a compositional bias: acidic residues. The 170-residue stretch at 433-602 (NFPSPFTNIL…SADGAEADVH (170 aa)) folds into the Helicase C-terminal domain. Residues 630-722 (AIGHINRYCA…MPVGKETVKY (93 aa)) form the Dicer dsRNA-binding fold domain. Positions 726–745 (LDLHDEEETSVPGRPGSTKR) are disordered. The 148-residue stretch at 895 to 1042 (KFMEDIEKSE…LVPELCAIHP (148 aa)) folds into the PAZ domain. Phosphoserine occurs at positions 1016 and 1160. The RNase III 1 domain occupies 1276-1403 (DSEQSPSVGY…SEKWEKDEMT (128 aa)). Positions 1316, 1395, and 1398 each coordinate Mg(2+). Residues serine 1456, serine 1464, and serine 1466 each carry the phosphoserine modification. The tract at residues 1598-1626 (ALDPAQENGSSQQKSLSGSCAAPVGPRSS) is disordered. The span at 1604–1615 (ENGSSQQKSLSG) shows a compositional bias: polar residues. Positions 1660-1818 (FETFEKKINY…LAGAIYMDSG (159 aa)) constitute an RNase III 2 domain. Mg(2+)-binding residues include glutamate 1699, aspartate 1804, and glutamate 1807. One can recognise a DRBM domain in the interval 1843 to 1908 (VPRSPVRELL…ARRALRSLKA (66 aa)). Residue serine 1862 is modified to Phosphoserine.

It belongs to the helicase family. Dicer subfamily. As to quaternary structure, component of the RISC loading complex (RLC), or micro-RNA (miRNA) loading complex (miRLC), which is composed of DICER1, AGO2 and TARBP2; DICER1 and TARBP2 are required to process precursor miRNAs (pre-miRNAs) to mature miRNAs and then load them onto AGO2. Note that the trimeric RLC/miRLC is also referred to as RISC. Interacts with DHX9, AGO1, PIWIL1 and PRKRA. Interacts with AGO2, TARBP2, EIF6, MOV10 and RPL7A (60S ribosome subunit); they form a large RNA-induced silencing complex (RISC). Interacts with BCDIN3D. Interacts (via Dicer dsRNA-binding fold domain) with ALOX5 (via PLAT domain); this interaction enhances arachidonate 5-lipoxygenase activity and modifies the miRNA precursor processing activity of DICER1. Mg(2+) is required as a cofactor. Mn(2+) serves as cofactor. Isoform 1 is expressed in a wide variety of tissues. Isoform 2 is specifically expressed in oocytes during their growth (at protein level).

It is found in the cytoplasm. It carries out the reaction Endonucleolytic cleavage to 5'-phosphomonoester.. Its function is as follows. Double-stranded RNA (dsRNA) endoribonuclease playing a central role in short dsRNA-mediated post-transcriptional gene silencing. Cleaves naturally occurring long dsRNAs and short hairpin pre-microRNAs (miRNA) into fragments of twenty-one to twenty-three nucleotides with 3' overhang of two nucleotides, producing respectively short interfering RNAs (siRNA) and mature microRNAs. SiRNAs and miRNAs serve as guide to direct the RNA-induced silencing complex (RISC) to complementary RNAs to degrade them or prevent their translation. Gene silencing mediated by siRNAs, also called RNA interference, controls the elimination of transcripts from mobile and repetitive DNA elements of the genome but also the degradation of exogenous RNA of viral origin for instance. The miRNA pathway on the other side is a mean to specifically regulate the expression of target genes. Functionally, more active than isoform 1 to process long double-stranded RNA into siRNAs. Responsible for the accumulation of endogenous siRNAs observed in mouse oocytes compared to somatic cells and it regulates meiotic spindle organization in female germline. This chain is Endoribonuclease Dicer (Dicer1), found in Mus musculus (Mouse).